A 492-amino-acid polypeptide reads, in one-letter code: Lysine--tRNA ligase (492 aa).

Glutamate 403 and glutamate 410 together coordinate Mg(2+).

This sequence belongs to the class-II aminoacyl-tRNA synthetase family. In terms of assembly, homodimer. Mg(2+) serves as cofactor.

It is found in the cytoplasm. The catalysed reaction is tRNA(Lys) + L-lysine + ATP = L-lysyl-tRNA(Lys) + AMP + diphosphate. In Mycoplasmoides gallisepticum (strain R(low / passage 15 / clone 2)) (Mycoplasma gallisepticum), this protein is Lysine--tRNA ligase.